We begin with the raw amino-acid sequence, 157 residues long: SsrA-binding protein (157 aa).

Residues 133–157 are disordered; sequence HDKRNSIKEREGKREVERALKSRSR.

The protein belongs to the SmpB family.

The protein localises to the cytoplasm. In terms of biological role, required for rescue of stalled ribosomes mediated by trans-translation. Binds to transfer-messenger RNA (tmRNA), required for stable association of tmRNA with ribosomes. tmRNA and SmpB together mimic tRNA shape, replacing the anticodon stem-loop with SmpB. tmRNA is encoded by the ssrA gene; the 2 termini fold to resemble tRNA(Ala) and it encodes a 'tag peptide', a short internal open reading frame. During trans-translation Ala-aminoacylated tmRNA acts like a tRNA, entering the A-site of stalled ribosomes, displacing the stalled mRNA. The ribosome then switches to translate the ORF on the tmRNA; the nascent peptide is terminated with the 'tag peptide' encoded by the tmRNA and targeted for degradation. The ribosome is freed to recommence translation, which seems to be the essential function of trans-translation. In Verminephrobacter eiseniae (strain EF01-2), this protein is SsrA-binding protein.